The sequence spans 451 residues: Protein-tyrosine kinase 6 (451 aa).

Residues 8–72 (HLGPKYVGLW…PHNYLAERET (65 aa)) enclose the SH3 domain. Phosphotyrosine; by autocatalysis is present on residues Tyr13, Tyr61, Tyr66, and Tyr114. The SH2 domain occupies 78 to 170 (WFFGCISRSE…SHGLRLAAPC (93 aa)). Positions 171–190 (RKHEPEPLPHWDDWERPREE) are linker. The Protein kinase domain occupies 191–445 (FTLCRKLGSG…ALRERLSSFT (255 aa)). ATP-binding positions include 197-205 (LGSGYFGEV) and Lys219. The active-site Proton acceptor is Asp312. Tyr342 and Tyr351 each carry phosphotyrosine; by autocatalysis. Tyr447 bears the Phosphotyrosine mark.

It belongs to the protein kinase superfamily. Tyr protein kinase family. BRK/PTK6/SIK subfamily. In terms of assembly, interacts with GAP-A.p65. Interacts (via SH3 and SH2 domains) with KHDRBS1. Interacts (via SH3 and SH2 domains) with phosphorylated IRS4. Interacts with ADAM15. Interacts (via SH3 domain) with SFPQ. Interacts with EGFR and ERBB2. Interacts with STAP2. Interacts with PNX. Interacts with SFPQ. Interacts with PTK/ATK. Interacts with CTNNB1. Post-translationally, autophosphorylated. Autophosphorylation of Tyr-342 leads to an increase of kinase activity. Tyr-447 binds to the SH2 domain when phosphorylated and negatively regulates kinase activity. As to expression, epithelia-specific. Very high level in colon and high levels in small intestine and prostate, and low levels in some fetal tissues. Not expressed in breast or ovarian tissue but expressed in high percentage of breast and ovarian cancers. Also overexpressed in some metastatic melanomas, lymphomas, colon cancers, squamous cell carcinomas and prostate cancers. Also found in melanocytes. Not expressed in heart, brain, placenta, lung, liver, skeletal muscle, kidney and pancreas. Isoform 2 is present in prostate epithelial cell lines derived from normal prostate and prostate adenocarcinomas, as well as in a variety of cell lines.

It localises to the cytoplasm. Its subcellular location is the nucleus. It is found in the cell projection. The protein resides in the ruffle. The protein localises to the membrane. It carries out the reaction L-tyrosyl-[protein] + ATP = O-phospho-L-tyrosyl-[protein] + ADP + H(+). With respect to regulation, activated by EGF, NRG1 and IGF1. Inhibited by SOCS3 to phosphorylate STAT3. Stabilized in the inactive form by an association between the SH3 domain and the SH2-TK linker region. Interaction between Trp-184 within SH2-TK linker region and the catalytic domain appears essential for positive regulation of kinase activity. Functionally, non-receptor tyrosine-protein kinase implicated in the regulation of a variety of signaling pathways that control the differentiation and maintenance of normal epithelia, as well as tumor growth. Function seems to be context dependent and differ depending on cell type, as well as its intracellular localization. A number of potential nuclear and cytoplasmic substrates have been identified. These include the RNA-binding proteins: KHDRBS1/SAM68, KHDRBS2/SLM1, KHDRBS3/SLM2 and SFPQ/PSF; transcription factors: STAT3 and STAT5A/B and a variety of signaling molecules: ARHGAP35/p190RhoGAP, PXN/paxillin, BTK/ATK, STAP2/BKS. Phosphorylates the GTPase-activating protein ARAP1 following EGF stimulation which enhances EGFR signaling by delaying EGFR down-regulation. Also associates with a variety of proteins that are likely upstream of PTK6 in various signaling pathways, or for which PTK6 may play an adapter-like role. These proteins include ADAM15, EGFR, ERBB2, ERBB3 and IRS4. In normal or non-tumorigenic tissues, PTK6 promotes cellular differentiation and apoptosis. In tumors PTK6 contributes to cancer progression by sensitizing cells to mitogenic signals and enhancing proliferation, anchorage-independent survival and migration/invasion. Association with EGFR, ERBB2, ERBB3 may contribute to mammary tumor development and growth through enhancement of EGF-induced signaling via BTK/AKT and PI3 kinase. Contributes to migration and proliferation by contributing to EGF-mediated phosphorylation of ARHGAP35/p190RhoGAP, which promotes association with RASA1/p120RasGAP, inactivating RhoA while activating RAS. EGF stimulation resulted in phosphorylation of PNX/Paxillin by PTK6 and activation of RAC1 via CRK/CrKII, thereby promoting migration and invasion. PTK6 activates STAT3 and STAT5B to promote proliferation. Nuclear PTK6 may be important for regulating growth in normal epithelia, while cytoplasmic PTK6 might activate oncogenic signaling pathways. Inhibits PTK6 phosphorylation and PTK6 association with other tyrosine-phosphorylated proteins. This Homo sapiens (Human) protein is Protein-tyrosine kinase 6 (PTK6).